The chain runs to 162 residues: Colicin V production protein (162 aa).

Residues 1–21 (MVWIDYAIIAVIAFSSLVSLI) traverse the membrane as a helical segment. At 22-31 (RGFVREALSL) the chain is on the cytoplasmic side. Residues 32 to 52 (VTWGCAFFVASHYYTYLSVWF) traverse the membrane as a helical segment. Topologically, residues 53–63 (TGFEDELVRNG) are periplasmic. Residues 64–84 (IAIAVLFIATLIVGAIVNFVI) traverse the membrane as a helical segment. The Cytoplasmic portion of the chain corresponds to 85-98 (GQLVEKTGLSGTDR). Residues 99 to 119 (VLGVCFGALRGVLIVAAILFF) form a helical membrane-spanning segment. Residues 120-162 (LDSFTGVSKSEDWSKSQLIPQFSFIIRCFFDYLQSSSSFLPRA) are Periplasmic-facing.

It is found in the cell inner membrane. Functionally, required for colicin V production from plasmid IncFI ColV3-K30. The polypeptide is Colicin V production protein (cvpA) (Escherichia coli (strain K12)).